The chain runs to 418 residues: 3-deoxy-D-manno-octulosonic acid transferase (418 aa).

The helical; Signal-anchor transmembrane segment at 7 to 27 threads the bilayer; sequence FLSFLLLPIYFVIIFIRLLIG. Residue E60 is the Proton acceptor of the active site. CMP contacts are provided by residues 264 to 265, 305 to 307, and 330 to 333; these read PR, FGE, and NILE.

It belongs to the glycosyltransferase group 1 family. Glycosyltransferase 30 subfamily.

It localises to the cell inner membrane. The enzyme catalyses lipid IVA (E. coli) + CMP-3-deoxy-beta-D-manno-octulosonate = alpha-Kdo-(2-&gt;6)-lipid IVA (E. coli) + CMP + H(+). The protein operates within bacterial outer membrane biogenesis; LPS core biosynthesis. Functionally, involved in lipopolysaccharide (LPS) biosynthesis. Catalyzes the transfer of 3-deoxy-D-manno-octulosonate (Kdo) residue(s) from CMP-Kdo to lipid IV(A), the tetraacyldisaccharide-1,4'-bisphosphate precursor of lipid A. The protein is 3-deoxy-D-manno-octulosonic acid transferase (waaA) of Rickettsia bellii (strain RML369-C).